A 172-amino-acid chain; its full sequence is Arginine repressor (172 aa).

It belongs to the ArgR family.

It is found in the cytoplasm. It participates in amino-acid biosynthesis; L-arginine biosynthesis [regulation]. Regulates arginine biosynthesis genes. This chain is Arginine repressor, found in Bifidobacterium adolescentis (strain ATCC 15703 / DSM 20083 / NCTC 11814 / E194a).